The primary structure comprises 98 residues: Integration host factor subunit alpha (98 aa).

The interval 49-70 is disordered; sequence FGNFDLRDKNQRPGRNPKTGED.

Belongs to the bacterial histone-like protein family. Heterodimer of an alpha and a beta chain.

Its function is as follows. This protein is one of the two subunits of integration host factor, a specific DNA-binding protein that functions in genetic recombination as well as in transcriptional and translational control. The sequence is that of Integration host factor subunit alpha from Shewanella baltica (strain OS223).